We begin with the raw amino-acid sequence, 920 residues long: MPLRLEIKRKFAQRSERVKSVDLHPTEPWILASLYSGTLCIWNYQTQTMVKSFDVTELPVRSAKFIARKQWVVAGADDMFIRVYNYNTMDKIKVFEAHADYIRCVAVHPTLPYVLSSSDDMLIKLWDWEKGWLCTQIFEGHSHYVMQVTFNPKDTNTFASASLDRTIKIWNLGSPDPNFTLDAHLKGVNCVDYFTGGDKPYLITGSDDHTAKVWDYQTKSCVQTLEGHTHNVSAVSFHPELPIIITGSEDGTVRIWHATTYRLENTLNYGLERVWAIGHIKGSRRVVIGYDEGSIMVKLGREIPVASMDNSGKIIWAKHNEIHTVNIKSVGADEVTDGERLPLAVKELGTCDLYPQSLKHNPNGRFVVVCGDGEYIIYTALAWRNRSFGSALEFVWSSDGEHAVRESSTKIKIFSKNFQEKKTVRPTFSAEHIFGGTLLTMCSSDFICFYDWAECRLIRRIDVTVKNLYWADSGDLVAIASDTSFYILKFNRDIVSSYFDGGKQIDEEGIEDAFELLNETNERVRTGLWVGDCFIYTNSSWRLNYCVGGEVTTMYHLDRPMYLLGYLANQSRVYLIDKEFNVIGYTLLLSLIEYKTLVMRGDLEQANEVLPSIPKEHHNSVAHFLESRGMTEDALEVATDPDYRFELAIQLGRLAVAKDIAVEAQNESKWKQLGELAMSSGKLDMAEECMRHAMDLSGLLLLYSSLGDADGMMKLAALAKEQGKNNVAFLCLFMLGQVEDCLHLLVESNRIPEAALMARSYLPSKVSEIVALWRNDLTKISPKAAESLADPEEYPNLFEEWQVALSLENRAAETRGVHPPAGDYCSHADRDHTTLVDAFRIMQIEEEGRLEQGDVLDEVGEEGEDGEEEEEEDRQEESSDGRQQNVEEEAVVVDADSTDGAVLVNGNESEEQWVLTPPQE.

WD repeat units lie at residues 13-52 (QRSERVKSVDLHPTEPWILASLYSGTLCIWNYQTQTMVKS), 55-94 (VTELPVRSAKFIARKQWVVAGADDMFIRVYNYNTMDKIKV), 97-136 (AHADYIRCVAVHPTLPYVLSSSDDMLIKLWDWEKGWLCTQ), 140-180 (GHSH…PNFT), 183-224 (AHLK…CVQT), 227-266 (GHTHNVSAVSFHPELPIIITGSEDGTVRIWHATTYRLENT), 350-392 (TCDL…GSAL), and 460-500 (RIDV…SYFD). Residues 850-920 (LEQGDVLDEV…EQWVLTPPQE (71 aa)) are disordered. The segment covering 854–875 (DVLDEVGEEGEDGEEEEEEDRQ) has biased composition (acidic residues).

This sequence belongs to the WD repeat COPB2 family. Oligomeric complex that consists of at least the alpha, beta, beta', gamma, delta, epsilon and zeta subunits.

The protein localises to the cytoplasm. The protein resides in the golgi apparatus membrane. Its subcellular location is the cytoplasmic vesicle. It is found in the COPI-coated vesicle membrane. The coatomer is a cytosolic protein complex that binds to dilysine motifs and reversibly associates with Golgi non-clathrin-coated vesicles, which further mediate biosynthetic protein transport from the ER, via the Golgi up to the trans Golgi network. Coatomer complex is required for budding from Golgi membranes, and is essential for the retrograde Golgi-to-ER transport of dilysine-tagged proteins. The polypeptide is Coatomer subunit beta'-1 (Arabidopsis thaliana (Mouse-ear cress)).